A 190-amino-acid chain; its full sequence is Putative 3-methyladenine DNA glycosylase (190 aa).

Belongs to the DNA glycosylase MPG family.

This chain is Putative 3-methyladenine DNA glycosylase, found in Corynebacterium efficiens (strain DSM 44549 / YS-314 / AJ 12310 / JCM 11189 / NBRC 100395).